The following is a 101-amino-acid chain: Urease subunit beta (101 aa).

Belongs to the urease beta subunit family. Heterotrimer of UreA (gamma), UreB (beta) and UreC (alpha) subunits. Three heterotrimers associate to form the active enzyme.

The protein resides in the cytoplasm. It carries out the reaction urea + 2 H2O + H(+) = hydrogencarbonate + 2 NH4(+). The protein operates within nitrogen metabolism; urea degradation; CO(2) and NH(3) from urea (urease route): step 1/1. In Rhizobium meliloti (strain 1021) (Ensifer meliloti), this protein is Urease subunit beta.